We begin with the raw amino-acid sequence, 354 residues long: Uroporphyrinogen decarboxylase (354 aa).

Residues 27 to 31 (RQAGR), Asp77, Tyr154, Ser209, and His327 each bind substrate.

The protein belongs to the uroporphyrinogen decarboxylase family. As to quaternary structure, homodimer.

It is found in the cytoplasm. The enzyme catalyses uroporphyrinogen III + 4 H(+) = coproporphyrinogen III + 4 CO2. Its pathway is porphyrin-containing compound metabolism; protoporphyrin-IX biosynthesis; coproporphyrinogen-III from 5-aminolevulinate: step 4/4. Catalyzes the decarboxylation of four acetate groups of uroporphyrinogen-III to yield coproporphyrinogen-III. This is Uroporphyrinogen decarboxylase from Shewanella amazonensis (strain ATCC BAA-1098 / SB2B).